A 263-amino-acid polypeptide reads, in one-letter code: Palmitoyltransferase ZDHHC22 (263 aa).

The Cytoplasmic portion of the chain corresponds to 1-9 (MLALRLLNV). A helical transmembrane segment spans residues 10 to 30 (VAPAYFLCISLVTFVLQLFLF). Over 31-47 (LPSMREDPTATPLFSPA) the chain is Lumenal. A helical transmembrane segment spans residues 48-68 (VLHGALFLFLSANALGNYILV). Topologically, residues 69-125 (VQNSPDDLGACQGTSSQRPQRPPPSTHFCRVCARVTLRHDHHCFFTGNCIGSRNMRN) are cytoplasmic. The DHHC domain occupies 91–131 (PPSTHFCRVCARVTLRHDHHCFFTGNCIGSRNMRNFILFCL). Cys-111 (S-palmitoyl cysteine intermediate) is an active-site residue. A run of 2 helical transmembrane segments spans residues 126–146 (FILFCLYTSLACLYSMVAGVA) and 147–167 (YISAVLSISFAHPLAFLTLLP). Residues 168–182 (TSISQFFSGAVLGSD) are Cytoplasmic-facing. The helical transmembrane segment at 183–203 (MFVILMLYLWFAVGLACAGFC) threads the bilayer. The Lumenal portion of the chain corresponds to 204–263 (CHQLLLILRGQTRYQVRKGVAVRARPWRKNLQEVFGKRWLLGLLVPMFNVGTESSKQQDK).

This sequence belongs to the DHHC palmitoyltransferase family. As to quaternary structure, interacts with CNN3.

The protein localises to the endoplasmic reticulum membrane. It localises to the golgi apparatus membrane. It catalyses the reaction L-cysteinyl-[protein] + hexadecanoyl-CoA = S-hexadecanoyl-L-cysteinyl-[protein] + CoA. In terms of biological role, palmitoyltransferase that could catalyze the addition of palmitate onto various protein substrates and be involved in a variety of cellular processes. Catalyzes the palmitoylation of KCNMA1, regulating localization of KCNMA1 to the plasma membrane. Might also mediate palmitoylation of CNN3. The protein is Palmitoyltransferase ZDHHC22 of Rattus norvegicus (Rat).